Consider the following 144-residue polypeptide: Deoxyuridine 5'-triphosphate nucleotidohydrolase (144 aa).

8 residues coordinate dUMP: Ser66, Gly79, Asp82, Tyr85, Lys90, Arg134, Phe139, and Gly140.

The protein belongs to the dUTPase family. Homotrimer. It depends on Mg(2+) as a cofactor.

The enzyme catalyses dUTP + H2O = dUMP + diphosphate + H(+). It functions in the pathway pyrimidine metabolism; dUMP biosynthesis; dUMP from dCTP (dUTP route): step 2/2. In terms of biological role, involved in nucleotide metabolism via production of dUMP, the immediate precursor of thymidine nucleotides, and decreases the intracellular concentration of dUTP so that uracil cannot be incorporated into DNA. The polypeptide is Deoxyuridine 5'-triphosphate nucleotidohydrolase (DUT1) (Candida glabrata (strain ATCC 2001 / BCRC 20586 / JCM 3761 / NBRC 0622 / NRRL Y-65 / CBS 138) (Yeast)).